Reading from the N-terminus, the 358-residue chain is MQQIQVQLGDRSYPIYIGQDLMNDSELFARYLTNKKALIVSNDTIAPLYLQQIQQAMSACARIETVILPDGEKFKDLQHLDYIFTELLEHNFARDSVLVALGGGVVGDMTGFAAACYQRGIEFIQVPTTLLSQVDSSVGGKTAVNHPLGKNMIGAFYQPKSVIIDTFCLQTLPANEFAAGMAEVIKYGIIWDADFFQWLEANVDALKSLQTDALNYAIAKCCQIKADVVAQDETEQGVRALLNLGHTFGHAIEAEMGYGVWLHGEAVSAGTVLAAQTAYKLNLLDEQSVERICRLMQAFDLPITAPESMGFEQFIKHMRRDKKVLGGKIRLVLPTEIGKADVFSDVSEDLLKQVISCV.

Residues 70-75, 104-108, 128-129, Lys-141, Lys-150, and 168-171 each bind NAD(+); these read DGEKFK, GVVGD, TT, and CLQT. Zn(2+)-binding residues include Glu-183, His-246, and His-263.

It belongs to the sugar phosphate cyclases superfamily. Dehydroquinate synthase family. Co(2+) serves as cofactor. It depends on Zn(2+) as a cofactor. The cofactor is NAD(+).

The protein localises to the cytoplasm. The enzyme catalyses 7-phospho-2-dehydro-3-deoxy-D-arabino-heptonate = 3-dehydroquinate + phosphate. The protein operates within metabolic intermediate biosynthesis; chorismate biosynthesis; chorismate from D-erythrose 4-phosphate and phosphoenolpyruvate: step 2/7. Catalyzes the conversion of 3-deoxy-D-arabino-heptulosonate 7-phosphate (DAHP) to dehydroquinate (DHQ). The chain is 3-dehydroquinate synthase from Shewanella frigidimarina (strain NCIMB 400).